A 208-amino-acid chain; its full sequence is LexA repressor (208 aa).

The segment at residues 28 to 48 (RAEIARQLGFRSANAAEEHLK) is a DNA-binding region (H-T-H motif). Active-site for autocatalytic cleavage activity residues include Ser125 and Lys162.

The protein belongs to the peptidase S24 family. Homodimer.

It catalyses the reaction Hydrolysis of Ala-|-Gly bond in repressor LexA.. Represses a number of genes involved in the response to DNA damage (SOS response), including recA and lexA. In the presence of single-stranded DNA, RecA interacts with LexA causing an autocatalytic cleavage which disrupts the DNA-binding part of LexA, leading to derepression of the SOS regulon and eventually DNA repair. The protein is LexA repressor of Alteromonas mediterranea (strain DSM 17117 / CIP 110805 / LMG 28347 / Deep ecotype).